The following is a 508-amino-acid chain: Photosystem II CP47 reaction center protein (508 aa).

The next 6 membrane-spanning stretches (helical) occupy residues Ala-21–Ser-36, Ile-101–Trp-115, Gly-140–Phe-156, Ile-203–Ser-218, Val-237–Val-252, and Ser-457–Arg-472.

This sequence belongs to the PsbB/PsbC family. PsbB subfamily. As to quaternary structure, PSII is composed of 1 copy each of membrane proteins PsbA, PsbB, PsbC, PsbD, PsbE, PsbF, PsbH, PsbI, PsbJ, PsbK, PsbL, PsbM, PsbT, PsbX, PsbY, PsbZ, Psb30/Ycf12, at least 3 peripheral proteins of the oxygen-evolving complex and a large number of cofactors. It forms dimeric complexes. It depends on Binds multiple chlorophylls. PSII binds additional chlorophylls, carotenoids and specific lipids. as a cofactor.

It localises to the plastid. Its subcellular location is the chloroplast thylakoid membrane. In terms of biological role, one of the components of the core complex of photosystem II (PSII). It binds chlorophyll and helps catalyze the primary light-induced photochemical processes of PSII. PSII is a light-driven water:plastoquinone oxidoreductase, using light energy to abstract electrons from H(2)O, generating O(2) and a proton gradient subsequently used for ATP formation. The protein is Photosystem II CP47 reaction center protein of Trachelium caeruleum (Blue throatwort).